A 105-amino-acid chain; its full sequence is Large ribosomal subunit protein uL24 (105 aa).

It belongs to the universal ribosomal protein uL24 family. As to quaternary structure, part of the 50S ribosomal subunit.

Its function is as follows. One of two assembly initiator proteins, it binds directly to the 5'-end of the 23S rRNA, where it nucleates assembly of the 50S subunit. Functionally, one of the proteins that surrounds the polypeptide exit tunnel on the outside of the subunit. This is Large ribosomal subunit protein uL24 from Sorangium cellulosum (strain So ce56) (Polyangium cellulosum (strain So ce56)).